Reading from the N-terminus, the 955-residue chain is Glycine dehydrogenase (decarboxylating) (955 aa).

Lys-705 carries the N6-(pyridoxal phosphate)lysine modification.

The protein belongs to the GcvP family. The glycine cleavage system is composed of four proteins: P, T, L and H. Pyridoxal 5'-phosphate serves as cofactor.

The enzyme catalyses N(6)-[(R)-lipoyl]-L-lysyl-[glycine-cleavage complex H protein] + glycine + H(+) = N(6)-[(R)-S(8)-aminomethyldihydrolipoyl]-L-lysyl-[glycine-cleavage complex H protein] + CO2. The glycine cleavage system catalyzes the degradation of glycine. The P protein binds the alpha-amino group of glycine through its pyridoxal phosphate cofactor; CO(2) is released and the remaining methylamine moiety is then transferred to the lipoamide cofactor of the H protein. This is Glycine dehydrogenase (decarboxylating) from Aliivibrio fischeri (strain MJ11) (Vibrio fischeri).